The following is a 1090-amino-acid chain: Protein CHROMATIN REMODELING 24 (1090 aa).

2 disordered regions span residues 1–51 (MAEN…MIKL) and 247–273 (VGKQ…NLDR). A Nuclear localization signal motif is present at residues 44 to 51 (TKKSMIKL). Residues 256–273 (RHFDDNSEDNRQGYNLDR) show a composition bias toward basic and acidic residues. Positions 389–564 (WSLHTQGKGG…WALFNFSCPG (176 aa)) constitute a Helicase ATP-binding domain. 402 to 409 (DDMGLGKT) is a binding site for ATP. The DEAH box motif lies at 515–518 (DEGH). The Helicase C-terminal domain maps to 736–895 (FIMSLLENLI…IRYFSQQDLR (160 aa)). Residues 1043–1069 (DGGAKIQKQIAELTRELKDMKAAERIN) adopt a coiled-coil conformation.

It belongs to the SNF2/RAD54 helicase family.

The protein localises to the nucleus. Functionally, DNA helicase that acts as an essential component of the spindle assembly checkpoint. Probable chromatin remodeling factor that regulate homologous recombination (HR) and non-homologous recombination (NHR). In Arabidopsis thaliana (Mouse-ear cress), this protein is Protein CHROMATIN REMODELING 24.